The following is a 216-amino-acid chain: Large ribosomal subunit protein uL1B (216 aa).

The residue at position 11 (serine 11) is a Phosphoserine.

It belongs to the universal ribosomal protein uL1 family. As to quaternary structure, component of the large ribosomal subunit (LSU). Mature yeast ribosomes consist of a small (40S) and a large (60S) subunit. The 40S small subunit contains 1 molecule of ribosomal RNA (18S rRNA) and at least 33 different proteins. The large 60S subunit contains 3 rRNA molecules (25S, 5.8S and 5S rRNA) and at least 46 different proteins. uL1 forms part of the L1 stalk.

Its subcellular location is the cytoplasm. In terms of biological role, component of the ribosome, a large ribonucleoprotein complex responsible for the synthesis of proteins in the cell. The small ribosomal subunit (SSU) binds messenger RNAs (mRNAs) and translates the encoded message by selecting cognate aminoacyl-transfer RNA (tRNA) molecules. The large subunit (LSU) contains the ribosomal catalytic site termed the peptidyl transferase center (PTC), which catalyzes the formation of peptide bonds, thereby polymerizing the amino acids delivered by tRNAs into a polypeptide chain. The nascent polypeptides leave the ribosome through a tunnel in the LSU and interact with protein factors that function in enzymatic processing, targeting, and the membrane insertion of nascent chains at the exit of the ribosomal tunnel. uL1 forms part of the L1 stalk, a mobile element that plays a role in evacuating the exit-site tRNA. This Schizosaccharomyces pombe (strain 972 / ATCC 24843) (Fission yeast) protein is Large ribosomal subunit protein uL1B (rpl101).